The sequence spans 49 residues: Large ribosomal subunit protein bL33B (49 aa).

Belongs to the bacterial ribosomal protein bL33 family.

The sequence is that of Large ribosomal subunit protein bL33B (rpmG2) from Lactococcus lactis subsp. cremoris (Streptococcus cremoris).